We begin with the raw amino-acid sequence, 338 residues long: UDP-glucose 4-epimerase (338 aa).

Residues 16 to 17, 37 to 42, 59 to 60, 81 to 85, threonine 126, tyrosine 153, lysine 157, and phenylalanine 181 each bind NAD(+); these read YI, IDINHT, NL, and FAAKT. Positions 126 and 153 each coordinate substrate. Tyrosine 153 (proton acceptor) is an active-site residue. Substrate-binding positions include asparagine 182, 198 to 199, 215 to 217, arginine 230, and 294 to 297; these read TL, FLY, and RAGD.

This sequence belongs to the NAD(P)-dependent epimerase/dehydratase family. In terms of assembly, homodimer. NAD(+) serves as cofactor.

It carries out the reaction UDP-alpha-D-glucose = UDP-alpha-D-galactose. It participates in carbohydrate metabolism; galactose metabolism. Its function is as follows. Involved in the metabolism of galactose. Catalyzes the conversion of UDP-galactose (UDP-Gal) to UDP-glucose (UDP-Glc) through a mechanism involving the transient reduction of NAD. The polypeptide is UDP-glucose 4-epimerase (galE) (Mycoplasma pneumoniae (strain ATCC 29342 / M129 / Subtype 1) (Mycoplasmoides pneumoniae)).